Here is a 60-residue protein sequence, read N- to C-terminus: Cytochrome c oxidase subunit 9, mitochondrial (60 aa).

At 1 to 15 the chain is on the mitochondrial matrix side; sequence MSAIAPITGTIRKRI. A helical membrane pass occupies residues 16–38; sequence LADITIGFAIGGAMASYWWWGFH. Residues 39 to 57 lie on the Mitochondrial intermembrane side of the membrane; sequence KNIINKREAYYAKLAEQKA. The propeptide at 58-60 is removed in mature form; that stretch reads AEN.

The protein belongs to the fungal cytochrome c oxidase subunit 7a family. Component of the cytochrome c oxidase (complex IV, CIV), a multisubunit enzyme composed of a catalytic core of 3 subunits and several supernumerary subunits. The complex exists as a monomer or a dimer and forms supercomplexes (SCs) in the inner mitochondrial membrane with ubiquinol-cytochrome c oxidoreductase (cytochrome b-c1 complex, complex III, CIII).

The protein resides in the mitochondrion inner membrane. The protein operates within energy metabolism; oxidative phosphorylation. Functionally, component of the cytochrome c oxidase, the last enzyme in the mitochondrial electron transport chain which drives oxidative phosphorylation. The respiratory chain contains 3 multisubunit complexes succinate dehydrogenase (complex II, CII), ubiquinol-cytochrome c oxidoreductase (cytochrome b-c1 complex, complex III, CIII) and cytochrome c oxidase (complex IV, CIV), that cooperate to transfer electrons derived from NADH and succinate to molecular oxygen, creating an electrochemical gradient over the inner membrane that drives transmembrane transport and the ATP synthase. Cytochrome c oxidase is the component of the respiratory chain that catalyzes the reduction of oxygen to water. Electrons originating from reduced cytochrome c in the intermembrane space (IMS) are transferred via the dinuclear copper A center (CU(A)) of subunit 2 and heme A of subunit 1 to the active site in subunit 1, a binuclear center (BNC) formed by heme A3 and copper B (CU(B)). The BNC reduces molecular oxygen to 2 water molecules using 4 electrons from cytochrome c in the IMS and 4 protons from the mitochondrial matrix. The chain is Cytochrome c oxidase subunit 9, mitochondrial (COX9) from Kluyveromyces lactis (strain ATCC 8585 / CBS 2359 / DSM 70799 / NBRC 1267 / NRRL Y-1140 / WM37) (Yeast).